Here is a 658-residue protein sequence, read N- to C-terminus: MMPIRDGQPAPRGASYDGKGVNFSLFSQRAERVELCLYDDDGVETRLDLPAHSGDIWHGYLPAVRPGQRYGYRVHGPWQPQQGLRFNPAKLLLDPCARGIEGEVTDNPCFQSGEEQPDTLDSGPLAPKGVVLADDFDWEDDTWPRVPWGSTVIYEAHVRGLTQLHPGIPAEMRGTYAALGHPVMIDYFQRLGITSLQLLPVACFASEPRLLRLGLSNYWGYNPLACYALESRYACGQNPREEFQQAVKTLHQAGIEVILDVVFNHSAELDENGPTLSMRGIDNPTYYWLDGQGNYDNWTGCGNTQNLVHPEAVASTLDCLRYWVEECHIDGFRFDLATTLGRTPEYRRDAPLFQAIAADPLLAQCKIIAEPWDIGPRGYQVGNFPPPFAEWNDHFRDTARRYWLHGDFSNGDFARRFAASSDLFQKQGRLPSASLNYITAHDGFTLRDLVSFEHKHNEANGEDNRDGSNNNFSYNHGVEGLKAPLLVTEHRRRSIHALLTTLLLAQGTPMLLAGDEHGHSQHGNNNAYCQDNVLTWLDWKHGDRGLFSFTAALIHLRRRIPALQQDRWWQEGDGSVEWLNGQGRQLNRLEWEQGVHRLQIRLSKQWLITLNATEEVCDLVLPPGKWHAVPPFAGEDNPILLTVWHGAAQGVCVFQEKS.

D335 acts as the Nucleophile in catalysis. Catalysis depends on E370, which acts as the Proton donor.

It belongs to the glycosyl hydrolase 13 family.

It catalyses the reaction Hydrolysis of (1-&gt;6)-alpha-D-glucosidic linkages to branches with degrees of polymerization of three or four glucose residues in limit dextrin.. The protein operates within glycan degradation; glycogen degradation. Functionally, removes maltotriose and maltotetraose chains that are attached by 1,6-alpha-linkage to the limit dextrin main chain, generating a debranched limit dextrin. The polypeptide is Glycogen debranching enzyme (Erwinia tasmaniensis (strain DSM 17950 / CFBP 7177 / CIP 109463 / NCPPB 4357 / Et1/99)).